Reading from the N-terminus, the 456-residue chain is Probable glycine dehydrogenase (decarboxylating) subunit 1 (456 aa).

This sequence belongs to the GcvP family. N-terminal subunit subfamily. As to quaternary structure, the glycine cleavage system is composed of four proteins: P, T, L and H. In this organism, the P 'protein' is a heterodimer of two subunits.

The catalysed reaction is N(6)-[(R)-lipoyl]-L-lysyl-[glycine-cleavage complex H protein] + glycine + H(+) = N(6)-[(R)-S(8)-aminomethyldihydrolipoyl]-L-lysyl-[glycine-cleavage complex H protein] + CO2. Functionally, the glycine cleavage system catalyzes the degradation of glycine. The P protein binds the alpha-amino group of glycine through its pyridoxal phosphate cofactor; CO(2) is released and the remaining methylamine moiety is then transferred to the lipoamide cofactor of the H protein. This chain is Probable glycine dehydrogenase (decarboxylating) subunit 1, found in Legionella pneumophila subsp. pneumophila (strain Philadelphia 1 / ATCC 33152 / DSM 7513).